The sequence spans 158 residues: 2-C-methyl-D-erythritol 2,4-cyclodiphosphate synthase (158 aa).

The a divalent metal cation site is built by Asp8 and His10. 4-CDP-2-C-methyl-D-erythritol 2-phosphate-binding positions include 8-10 (DVH) and 34-35 (HS). His42 provides a ligand contact to a divalent metal cation. Residues 56 to 58 (DIG), 61 to 65 (FPDTD), 100 to 106 (AQVPKMA), 132 to 135 (TTTE), Phe139, and Arg142 contribute to the 4-CDP-2-C-methyl-D-erythritol 2-phosphate site.

This sequence belongs to the IspF family. As to quaternary structure, homotrimer. The cofactor is a divalent metal cation.

It carries out the reaction 4-CDP-2-C-methyl-D-erythritol 2-phosphate = 2-C-methyl-D-erythritol 2,4-cyclic diphosphate + CMP. It functions in the pathway isoprenoid biosynthesis; isopentenyl diphosphate biosynthesis via DXP pathway; isopentenyl diphosphate from 1-deoxy-D-xylulose 5-phosphate: step 4/6. In terms of biological role, involved in the biosynthesis of isopentenyl diphosphate (IPP) and dimethylallyl diphosphate (DMAPP), two major building blocks of isoprenoid compounds. Catalyzes the conversion of 4-diphosphocytidyl-2-C-methyl-D-erythritol 2-phosphate (CDP-ME2P) to 2-C-methyl-D-erythritol 2,4-cyclodiphosphate (ME-CPP) with a corresponding release of cytidine 5-monophosphate (CMP). This chain is 2-C-methyl-D-erythritol 2,4-cyclodiphosphate synthase, found in Sodalis glossinidius (strain morsitans).